A 183-amino-acid chain; its full sequence is Dual-action ribosomal maturation protein DarP (183 aa).

The protein belongs to the DarP family.

It localises to the cytoplasm. In terms of biological role, member of a network of 50S ribosomal subunit biogenesis factors which assembles along the 30S-50S interface, preventing incorrect 23S rRNA structures from forming. Promotes peptidyl transferase center (PTC) maturation. The polypeptide is Dual-action ribosomal maturation protein DarP (Salmonella enteritidis PT4 (strain P125109)).